A 397-amino-acid polypeptide reads, in one-letter code: uncharacterized protein (397 aa).

The next 4 membrane-spanning stretches (helical) occupy residues 22 to 42, 270 to 290, 327 to 347, and 362 to 382; these read ILTM…VAVG, IMTT…GIGV, VVLT…GAAL, and VVCG…MLPA.

The protein belongs to the ABC-4 integral membrane protein family. In terms of assembly, part of a complex composed of YknX, YknY and YknZ. The complex interacts with YknW.

Its subcellular location is the cell membrane. It is found in the membrane raft. Part of an unusual four-component transporter, which is required for protection against the killing factor SdpC (sporulation-delaying protein). This is an uncharacterized protein from Bacillus subtilis (strain 168).